The sequence spans 160 residues: Transcription antitermination protein NusB (160 aa).

Belongs to the NusB family.

Its function is as follows. Involved in transcription antitermination. Required for transcription of ribosomal RNA (rRNA) genes. Binds specifically to the boxA antiterminator sequence of the ribosomal RNA (rrn) operons. This Maricaulis maris (strain MCS10) (Caulobacter maris) protein is Transcription antitermination protein NusB.